Here is a 1383-residue protein sequence, read N- to C-terminus: DNA-directed RNA polymerase subunit beta (1383 aa).

Belongs to the RNA polymerase beta chain family. The RNAP catalytic core consists of 2 alpha, 1 beta, 1 beta' and 1 omega subunit. When a sigma factor is associated with the core the holoenzyme is formed, which can initiate transcription.

The enzyme catalyses RNA(n) + a ribonucleoside 5'-triphosphate = RNA(n+1) + diphosphate. DNA-dependent RNA polymerase catalyzes the transcription of DNA into RNA using the four ribonucleoside triphosphates as substrates. This chain is DNA-directed RNA polymerase subunit beta, found in Bartonella quintana (strain Toulouse) (Rochalimaea quintana).